Consider the following 209-residue polypeptide: Large ribosomal subunit protein uL3 (209 aa).

The disordered stretch occupies residues 141 to 163; that stretch reads RAVGSMGASSDPSRTFKNKRMPG.

This sequence belongs to the universal ribosomal protein uL3 family. Part of the 50S ribosomal subunit. Forms a cluster with proteins L14 and L19.

One of the primary rRNA binding proteins, it binds directly near the 3'-end of the 23S rRNA, where it nucleates assembly of the 50S subunit. The polypeptide is Large ribosomal subunit protein uL3 (Clostridium botulinum (strain Langeland / NCTC 10281 / Type F)).